The chain runs to 334 residues: Serine/Arginine-related protein 53 (334 aa).

Positions 1–13 (MGRRSSDTEEESR) are enriched in basic and acidic residues. Disordered stretches follow at residues 1–179 (MGRR…HLPP), 198–220 (DEAL…EDQA), and 246–290 (RSSK…SIPT). The span at 14 to 24 (SKRKKKHRRRS) shows a compositional bias: basic residues. Residues 44 to 62 (PRSDSRSWSRDRQLRSHSY) show a composition bias toward basic and acidic residues. The span at 78–118 (SRRKRSRSRSRGRGKPYRVQRSRSKSRTRRSRSRPRPRSHS) shows a compositional bias: basic residues. Basic and acidic residues-rich tracts occupy residues 132 to 166 (RSRD…KRGD), 198 to 218 (DEAL…KEED), and 247 to 256 (SSKDVKKAVE). Residues 180–236 (AEQAKARLQLVLEAAAKADEALKAKERSEEEAKRRKEEDQATLVEQVKRVKEIEAIE) adopt a coiled-coil conformation. The span at 265-278 (AASGPASAAAEPPS) shows a compositional bias: low complexity.

Interacts (via Arg/Ser-rich domain) with LUC7L3, RBM39 and RSF1. Post-translationally, phosphorylated.

It localises to the nucleus. The protein resides in the nucleus speckle. Its subcellular location is the cytoplasm. Its function is as follows. Plays a role in pre-mRNA splicing. Involved in both constitutive and alternative pre-mRNA splicing. May have a role in the recognition of the 3' splice site during the second step of splicing. In Mus musculus (Mouse), this protein is Serine/Arginine-related protein 53 (Rsrc1).